The following is a 131-amino-acid chain: Small ribosomal subunit protein uS8 (131 aa).

Belongs to the universal ribosomal protein uS8 family. Part of the 30S ribosomal subunit. Contacts proteins S5 and S12.

Functionally, one of the primary rRNA binding proteins, it binds directly to 16S rRNA central domain where it helps coordinate assembly of the platform of the 30S subunit. The sequence is that of Small ribosomal subunit protein uS8 from Bordetella parapertussis (strain 12822 / ATCC BAA-587 / NCTC 13253).